The chain runs to 65 residues: Large ribosomal subunit protein bL35 (65 aa).

The disordered stretch occupies residues 1–26 (MPKIKTVRGAAKRFKKTASGGFKRKQ). The segment covering 10 to 26 (AAKRFKKTASGGFKRKQ) has biased composition (basic residues).

Belongs to the bacterial ribosomal protein bL35 family.

This Mannheimia succiniciproducens (strain KCTC 0769BP / MBEL55E) protein is Large ribosomal subunit protein bL35.